A 117-amino-acid chain; its full sequence is Large ribosomal subunit protein uL24 (117 aa).

The segment covering 1-12 has biased composition (polar residues); the sequence is MSKKNSQTSPQR. The interval 1 to 20 is disordered; it reads MSKKNSQTSPQRQKMHVKKG.

This sequence belongs to the universal ribosomal protein uL24 family. As to quaternary structure, part of the 50S ribosomal subunit.

One of two assembly initiator proteins, it binds directly to the 5'-end of the 23S rRNA, where it nucleates assembly of the 50S subunit. Its function is as follows. One of the proteins that surrounds the polypeptide exit tunnel on the outside of the subunit. In Microcystis aeruginosa (strain NIES-843 / IAM M-2473), this protein is Large ribosomal subunit protein uL24.